Here is a 465-residue protein sequence, read N- to C-terminus: Cysteine--tRNA ligase (465 aa).

A Zn(2+)-binding site is contributed by Cys-27. The short motif at 29 to 39 is the 'HIGH' region element; sequence PTVYDDAHLGH. Positions 207, 237, and 241 each coordinate Zn(2+). A 'KMSKS' region motif is present at residues 269–273; the sequence is KMSKS. Lys-272 contacts ATP.

Belongs to the class-I aminoacyl-tRNA synthetase family. In terms of assembly, monomer. Requires Zn(2+) as cofactor.

It is found in the cytoplasm. It carries out the reaction tRNA(Cys) + L-cysteine + ATP = L-cysteinyl-tRNA(Cys) + AMP + diphosphate. The sequence is that of Cysteine--tRNA ligase (cysS) from Helicobacter pylori (strain ATCC 700392 / 26695) (Campylobacter pylori).